The sequence spans 108 residues: Malonate decarboxylase acyl carrier protein (108 aa).

Ser-35 carries the O-(phosphoribosyl dephospho-coenzyme A)serine modification.

The protein belongs to the MdcC family. Post-translationally, covalently binds the prosthetic group of malonate decarboxylase.

The protein resides in the cytoplasm. Its function is as follows. Subunit of malonate decarboxylase, it is an acyl carrier protein to which acetyl and malonyl thioester residues are bound via a 2'-(5''-phosphoribosyl)-3'-dephospho-CoA prosthetic group and turn over during the catalytic mechanism. The protein is Malonate decarboxylase acyl carrier protein of Burkholderia cepacia (Pseudomonas cepacia).